The sequence spans 424 residues: MSTTTRTLQAIKFDRNNIKLEILDQLLLPYSTTYIPITSIEDAFKAIKLMQVRGAPAIAIVGAFSVVVEVSNYLKQSDSNRKTIENLNDSLDYLITSRPTAVNLANALNDIKQLLQEFNDTDIINEKIYQQIYDYAIALYDEDLANNKKIGENGLKYIINTLTEQNFKGPFSIMTICNTGSLATSGHGTALGIIRSTYQALQKNNSKEEFWLDHIYPCETRPYNQGAKLTTYELDYEQIPFTLICDNMVSSLINTLSDDDNKKPIKTNQISPVKFIIVGADRIVENGDTANKIGTFQLSTIANFFNNNKFIQQQSKSNTTKTTINKEIKFIVAAPKTTIDLNTKTGDDIVIEERPANELTTLVGPLLNEAGDVGEKLTVGIATPGISVWNPAFDVTPHELIDSIVTEDPHVFTKDENGEFNLIK.

The active-site Proton donor is the aspartate 281.

The protein belongs to the eIF-2B alpha/beta/delta subunits family. MtnA subfamily.

The protein localises to the cytoplasm. It localises to the nucleus. The catalysed reaction is 5-(methylsulfanyl)-alpha-D-ribose 1-phosphate = 5-(methylsulfanyl)-D-ribulose 1-phosphate. It functions in the pathway amino-acid biosynthesis; L-methionine biosynthesis via salvage pathway; L-methionine from S-methyl-5-thio-alpha-D-ribose 1-phosphate: step 1/6. Catalyzes the interconversion of methylthioribose-1-phosphate (MTR-1-P) into methylthioribulose-1-phosphate (MTRu-1-P). In Candida dubliniensis (strain CD36 / ATCC MYA-646 / CBS 7987 / NCPF 3949 / NRRL Y-17841) (Yeast), this protein is Methylthioribose-1-phosphate isomerase.